The chain runs to 339 residues: Heat-inducible transcription repressor HrcA (339 aa).

The protein belongs to the HrcA family.

Functionally, negative regulator of class I heat shock genes (grpE-dnaK-dnaJ and groELS operons). Prevents heat-shock induction of these operons. The sequence is that of Heat-inducible transcription repressor HrcA from Nitrosospira multiformis (strain ATCC 25196 / NCIMB 11849 / C 71).